Here is a 144-residue protein sequence, read N- to C-terminus: MLLAMVLTSALLLCSVAGQGCPTLAGILDINFLINKMQEDPASKCHCSANVTSCLCLGIPSDNCTRPCFSERLSQMTNTTMQTRYPLIFSRVKKSVEVLKNNKCPYFSCEQPCNQTTAGNALTFLKSLLEIFQKEKMRGMRGKI.

Residues 1-18 form the signal peptide; that stretch reads MLLAMVLTSALLLCSVAG. Gln19 carries the post-translational modification Pyrrolidone carboxylic acid. Residues Asn50, Asn63, Asn78, and Asn114 are each glycosylated (N-linked (GlcNAc...) asparagine).

Belongs to the IL-7/IL-9 family. As to quaternary structure, interacts with IL9R. Interacts with IL2RG.

Its subcellular location is the secreted. In terms of biological role, multifunctional cytokine secreted mainly by T-helper 2 lymphocytes and also mast cells or NKT cells that plays important roles in the immune response against parasites. Affects intestinal epithelial permeability and adaptive immunity. In addition, induces the differentiation of specific T-cell subsets such as IL-17 producing helper T-cells (TH17) and also proliferation and differentiation of mast cells. Mechanistically, exerts its biological effects through a receptor composed of IL9R subunit and a signal transducing subunit IL2RG. Receptor stimulation results in the rapid activation of JAK1 and JAK3 kinase activities leading to STAT1, STAT3 and STAT5-mediated transcriptional programs. Induction of differentiation genes seems to be mediated by STAT1 alone, while protection of cells from apoptosis depends on STAT3 and STAT5. This Homo sapiens (Human) protein is Interleukin-9 (IL9).